We begin with the raw amino-acid sequence, 228 residues long: Aldehyde dehydrogenase 9 (228 aa).

76–81 is an NAD(+) binding site; the sequence is GSTETA. Residues E99 and C132 contribute to the active site.

The protein belongs to the aldehyde dehydrogenase family.

The enzyme catalyses an aldehyde + NAD(+) + H2O = a carboxylate + NADH + 2 H(+). The protein operates within alcohol metabolism; ethanol degradation; acetate from ethanol: step 2/2. In Polyandrocarpa misakiensis (Tunicate), this protein is Aldehyde dehydrogenase 9 (ALDH9).